Reading from the N-terminus, the 379-residue chain is UDP-4-amino-4-deoxy-L-arabinose--oxoglutarate aminotransferase (379 aa).

N6-(pyridoxal phosphate)lysine is present on lysine 182.

It belongs to the DegT/DnrJ/EryC1 family. ArnB subfamily. Homodimer. Pyridoxal 5'-phosphate serves as cofactor.

It carries out the reaction UDP-4-amino-4-deoxy-beta-L-arabinose + 2-oxoglutarate = UDP-beta-L-threo-pentopyranos-4-ulose + L-glutamate. The protein operates within nucleotide-sugar biosynthesis; UDP-4-deoxy-4-formamido-beta-L-arabinose biosynthesis; UDP-4-deoxy-4-formamido-beta-L-arabinose from UDP-alpha-D-glucuronate: step 2/3. Its pathway is bacterial outer membrane biogenesis; lipopolysaccharide biosynthesis. Functionally, catalyzes the conversion of UDP-4-keto-arabinose (UDP-Ara4O) to UDP-4-amino-4-deoxy-L-arabinose (UDP-L-Ara4N). The modified arabinose is attached to lipid A and is required for resistance to polymyxin and cationic antimicrobial peptides. This Escherichia coli O1:K1 / APEC protein is UDP-4-amino-4-deoxy-L-arabinose--oxoglutarate aminotransferase.